We begin with the raw amino-acid sequence, 227 residues long: Cytochrome c oxidase subunit 2 (227 aa).

The Mitochondrial intermembrane portion of the chain corresponds to Met-1–Ser-14. The chain crosses the membrane as a helical span at residues Pro-15–Thr-45. The Mitochondrial matrix portion of the chain corresponds to Leu-46 to Gln-59. A helical membrane pass occupies residues Glu-60 to Thr-87. The Mitochondrial intermembrane segment spans residues Asp-88–Leu-227. His-161, Cys-196, Glu-198, Cys-200, His-204, and Met-207 together coordinate Cu cation. Glu-198 contacts Mg(2+).

It belongs to the cytochrome c oxidase subunit 2 family. Component of the cytochrome c oxidase (complex IV, CIV), a multisubunit enzyme composed of 14 subunits. The complex is composed of a catalytic core of 3 subunits MT-CO1, MT-CO2 and MT-CO3, encoded in the mitochondrial DNA, and 11 supernumerary subunits COX4I, COX5A, COX5B, COX6A, COX6B, COX6C, COX7A, COX7B, COX7C, COX8 and NDUFA4, which are encoded in the nuclear genome. The complex exists as a monomer or a dimer and forms supercomplexes (SCs) in the inner mitochondrial membrane with NADH-ubiquinone oxidoreductase (complex I, CI) and ubiquinol-cytochrome c oxidoreductase (cytochrome b-c1 complex, complex III, CIII), resulting in different assemblies (supercomplex SCI(1)III(2)IV(1) and megacomplex MCI(2)III(2)IV(2)). Found in a complex with TMEM177, COA6, COX18, COX20, SCO1 and SCO2. Interacts with TMEM177 in a COX20-dependent manner. Interacts with COX20. Interacts with COX16. Cu cation serves as cofactor.

The protein localises to the mitochondrion inner membrane. The enzyme catalyses 4 Fe(II)-[cytochrome c] + O2 + 8 H(+)(in) = 4 Fe(III)-[cytochrome c] + 2 H2O + 4 H(+)(out). Component of the cytochrome c oxidase, the last enzyme in the mitochondrial electron transport chain which drives oxidative phosphorylation. The respiratory chain contains 3 multisubunit complexes succinate dehydrogenase (complex II, CII), ubiquinol-cytochrome c oxidoreductase (cytochrome b-c1 complex, complex III, CIII) and cytochrome c oxidase (complex IV, CIV), that cooperate to transfer electrons derived from NADH and succinate to molecular oxygen, creating an electrochemical gradient over the inner membrane that drives transmembrane transport and the ATP synthase. Cytochrome c oxidase is the component of the respiratory chain that catalyzes the reduction of oxygen to water. Electrons originating from reduced cytochrome c in the intermembrane space (IMS) are transferred via the dinuclear copper A center (CU(A)) of subunit 2 and heme A of subunit 1 to the active site in subunit 1, a binuclear center (BNC) formed by heme A3 and copper B (CU(B)). The BNC reduces molecular oxygen to 2 water molecules using 4 electrons from cytochrome c in the IMS and 4 protons from the mitochondrial matrix. This is Cytochrome c oxidase subunit 2 (MT-CO2) from Symphalangus syndactylus (Siamang).